Reading from the N-terminus, the 176-residue chain is Cytochrome c-552 (176 aa).

Residues 12–32 (GALIGSLLFLLLMSWAASGIF) traverse the membrane as a helical; Signal-anchor segment. The heme c site is built by Cys90, Cys93, His94, Met126, and Met154.

In terms of processing, binds 1 heme c group covalently per subunit.

Its subcellular location is the cell membrane. Functionally, mediates the electron transport between the cytochrome bc1 complex and cytochrome-c oxidase. In Paracoccus denitrificans, this protein is Cytochrome c-552 (cycM).